A 642-amino-acid polypeptide reads, in one-letter code: 2-oxoacid:ferredoxin oxidoreductase 2, subunit alpha (642 aa).

A YPITP motif motif is present at residues 263–267 (YPITP). Residues T266 and R356 each contribute to the substrate site.

In terms of assembly, heterodimer composed of an alpha and a beta subunit.

It carries out the reaction a 2-oxocarboxylate + 2 oxidized [2Fe-2S]-[ferredoxin] + CoA = an acyl-CoA + 2 reduced [2Fe-2S]-[ferredoxin] + CO2 + H(+). In terms of biological role, catalyzes the coenzyme A-dependent oxidative decarboxylation of different 2-oxoacids such as pyruvate, 2-oxobutyrate, glyoxylate and 2-oxoglutarate to form their CoA derivatives. In Aeropyrum pernix (strain ATCC 700893 / DSM 11879 / JCM 9820 / NBRC 100138 / K1), this protein is 2-oxoacid:ferredoxin oxidoreductase 2, subunit alpha.